The following is a 295-amino-acid chain: UDP-N-acetylenolpyruvoylglucosamine reductase (295 aa).

An FAD-binding PCMH-type domain is found at 23–188 (KVGGPADFLA…ISAKFALKPG (166 aa)). Arginine 167 is an active-site residue. Serine 217 acts as the Proton donor in catalysis. Residue glutamate 287 is part of the active site.

This sequence belongs to the MurB family. Requires FAD as cofactor.

The protein resides in the cytoplasm. It carries out the reaction UDP-N-acetyl-alpha-D-muramate + NADP(+) = UDP-N-acetyl-3-O-(1-carboxyvinyl)-alpha-D-glucosamine + NADPH + H(+). Its pathway is cell wall biogenesis; peptidoglycan biosynthesis. In terms of biological role, cell wall formation. In Streptococcus pyogenes serotype M28 (strain MGAS6180), this protein is UDP-N-acetylenolpyruvoylglucosamine reductase.